A 137-amino-acid polypeptide reads, in one-letter code: Large-conductance mechanosensitive channel (137 aa).

The next 2 membrane-spanning stretches (helical) occupy residues 10–30 (FAMR…AAFG) and 76–96 (GVFI…FMAI).

It belongs to the MscL family. In terms of assembly, homopentamer.

The protein localises to the cell inner membrane. Its function is as follows. Channel that opens in response to stretch forces in the membrane lipid bilayer. May participate in the regulation of osmotic pressure changes within the cell. In Klebsiella pneumoniae subsp. pneumoniae (strain ATCC 700721 / MGH 78578), this protein is Large-conductance mechanosensitive channel.